A 137-amino-acid chain; its full sequence is Large ribosomal subunit protein uL22 (137 aa).

This sequence belongs to the universal ribosomal protein uL22 family. Part of the 50S ribosomal subunit.

In terms of biological role, this protein binds specifically to 23S rRNA; its binding is stimulated by other ribosomal proteins, e.g. L4, L17, and L20. It is important during the early stages of 50S assembly. It makes multiple contacts with different domains of the 23S rRNA in the assembled 50S subunit and ribosome. Its function is as follows. The globular domain of the protein is located near the polypeptide exit tunnel on the outside of the subunit, while an extended beta-hairpin is found that lines the wall of the exit tunnel in the center of the 70S ribosome. This is Large ribosomal subunit protein uL22 from Flavobacterium johnsoniae (strain ATCC 17061 / DSM 2064 / JCM 8514 / BCRC 14874 / CCUG 350202 / NBRC 14942 / NCIMB 11054 / UW101) (Cytophaga johnsonae).